A 554-amino-acid chain; its full sequence is Laccase-8 (554 aa).

The N-terminal stretch at 1 to 21 is a signal peptide; that stretch reads MASAAMLVPLVLVLCTAAASA. Plastocyanin-like domains lie at 29-145 and 156-309; these read KVGG…PRNG and EEIP…YKGV. 2 residues coordinate Cu cation: H79 and H81. N-linked (GlcNAc...) asparagine glycosylation is found at N107 and N113. H124 and H126 together coordinate Cu cation. Residues N271 and N369 are each glycosylated (N-linked (GlcNAc...) asparagine). Residues 411–537 form the Plastocyanin-like 3 domain; the sequence is DFPDFPPPMQ…AMVFEVLNGP (127 aa). H455, H458, H460, H516, C517, H518, and H522 together coordinate Cu cation.

The protein belongs to the multicopper oxidase family. The cofactor is Cu cation.

It is found in the secreted. Its subcellular location is the extracellular space. The protein resides in the apoplast. It carries out the reaction 4 hydroquinone + O2 = 4 benzosemiquinone + 2 H2O. Lignin degradation and detoxification of lignin-derived products. This is Laccase-8 (LAC8) from Oryza sativa subsp. japonica (Rice).